The chain runs to 373 residues: Chaperone protein DnaJ (373 aa).

Residues 4 to 69 form the J domain; the sequence is DYYETLSVER…SKRRIYDTYG (66 aa). The CR-type zinc-finger motif lies at 131–209; the sequence is GVSKEVKLSR…CHGEGLVKKT (79 aa). Zn(2+) is bound by residues cysteine 144, cysteine 147, cysteine 161, cysteine 164, cysteine 183, cysteine 186, cysteine 197, and cysteine 200. CXXCXGXG motif repeat units lie at residues 144–151, 161–168, 183–190, and 197–204; these read CWTCEGTG, CPTCNGRG, CPECEGEG, and CNDCHGEG.

Belongs to the DnaJ family. In terms of assembly, homodimer. Zn(2+) serves as cofactor.

Its subcellular location is the cytoplasm. Its function is as follows. Participates actively in the response to hyperosmotic and heat shock by preventing the aggregation of stress-denatured proteins and by disaggregating proteins, also in an autonomous, DnaK-independent fashion. Unfolded proteins bind initially to DnaJ; upon interaction with the DnaJ-bound protein, DnaK hydrolyzes its bound ATP, resulting in the formation of a stable complex. GrpE releases ADP from DnaK; ATP binding to DnaK triggers the release of the substrate protein, thus completing the reaction cycle. Several rounds of ATP-dependent interactions between DnaJ, DnaK and GrpE are required for fully efficient folding. Also involved, together with DnaK and GrpE, in the DNA replication of plasmids through activation of initiation proteins. The protein is Chaperone protein DnaJ of Desulfotalea psychrophila (strain LSv54 / DSM 12343).